The chain runs to 116 residues: uncharacterized protein (116 aa).

Disordered stretches follow at residues 1–26 (MLLT…KSSN) and 74–116 (ENDL…KSSI). Low complexity predominate over residues 14–26 (SANSTDDSSKSSN). The span at 74-86 (ENDLKRSKSQGRE) shows a compositional bias: basic and acidic residues. Residues 104 to 116 (NTASEIQRTKSSI) are compositionally biased toward polar residues.

This is an uncharacterized protein from Saccharomyces cerevisiae (strain ATCC 204508 / S288c) (Baker's yeast).